Reading from the N-terminus, the 532-residue chain is O-phosphoserine--tRNA(Cys) ligase (532 aa).

Substrate-binding positions include 188 to 190 (HMT), 233 to 235 (SAS), 275 to 276 (YY), and N327.

Belongs to the class-II aminoacyl-tRNA synthetase family. O-phosphoseryl-tRNA(Cys) synthetase subfamily. In terms of assembly, homotetramer. Interacts with SepCysS.

It catalyses the reaction tRNA(Cys) + O-phospho-L-serine + ATP = O-phospho-L-seryl-tRNA(Cys) + AMP + diphosphate. Functionally, catalyzes the attachment of O-phosphoserine (Sep) to tRNA(Cys). This Methanocella arvoryzae (strain DSM 22066 / NBRC 105507 / MRE50) protein is O-phosphoserine--tRNA(Cys) ligase.